Here is a 101-residue protein sequence, read N- to C-terminus: UPF0473 protein EF_1204 (101 aa).

It belongs to the UPF0473 family.

This Enterococcus faecalis (strain ATCC 700802 / V583) protein is UPF0473 protein EF_1204.